We begin with the raw amino-acid sequence, 129 residues long: Small ribosomal subunit protein uS11 (129 aa).

Belongs to the universal ribosomal protein uS11 family. As to quaternary structure, part of the 30S ribosomal subunit. Interacts with proteins S7 and S18. Binds to IF-3.

Functionally, located on the platform of the 30S subunit, it bridges several disparate RNA helices of the 16S rRNA. Forms part of the Shine-Dalgarno cleft in the 70S ribosome. The protein is Small ribosomal subunit protein uS11 of Sinorhizobium medicae (strain WSM419) (Ensifer medicae).